We begin with the raw amino-acid sequence, 181 residues long: Copper-resistant cuproprotein CopI (181 aa).

Residues 1–24 (MFPRRLLPASLIVLGVLFGASAQA) form the signal peptide. Cu(2+) is bound by residues His79, Cys163, His168, and Met173.

Belongs to the CopI family.

The protein resides in the periplasm. In terms of biological role, involved in copper tolerance. This chain is Copper-resistant cuproprotein CopI, found in Pseudomonas aeruginosa (strain ATCC 15692 / DSM 22644 / CIP 104116 / JCM 14847 / LMG 12228 / 1C / PRS 101 / PAO1).